A 361-amino-acid chain; its full sequence is MLTINIEKQLGQLQLKVNTQLPLRGVTAVFGRSGAGKTSLVNLLGGLTTPDKGEISLGDTLLFKHKTVNLPPEKRRIGYVFQEARLFPHYSVKGNLTYGMRHQSPALFDRIVQLLGLEKHLRSYPSTLSGGEKQRVAIGRALLTSPQMLLMDEPLASLDLPRKRELLPYLQTLAQELKLPIIYVSHSLDEILQLADHMLVLHQGHIIAQGPLTDVWNSEQMRPWVPLQELSSLICARIADRHPDYPMTRLVMDDGNQLWVSGQLPQTHKQVKVRIQANHVSVCTAEPKRSSIRNVLKGKIKELYPSDNDEQVQLKIALGNDELWANITLWACDELQLVAGKEIYAQIKGVTMTQMDIAQSH.

Residues 1 to 228 (MLTINIEKQL…EQMRPWVPLQ (228 aa)) form the ABC transporter domain. Residue 31–38 (GRSGAGKT) participates in ATP binding. In terms of domain architecture, Mop spans 289-356 (RSSIRNVLKG…IKGVTMTQMD (68 aa)).

Belongs to the ABC transporter superfamily. Molybdate importer (TC 3.A.1.8) family. As to quaternary structure, the complex is composed of two ATP-binding proteins (ModC), two transmembrane proteins (ModB) and a solute-binding protein (ModA).

The protein localises to the cell inner membrane. It catalyses the reaction molybdate(out) + ATP + H2O = molybdate(in) + ADP + phosphate + H(+). In terms of biological role, part of the ABC transporter complex ModABC involved in molybdenum import. Responsible for energy coupling to the transport system. The polypeptide is Molybdenum import ATP-binding protein ModC (Shewanella oneidensis (strain ATCC 700550 / JCM 31522 / CIP 106686 / LMG 19005 / NCIMB 14063 / MR-1)).